Here is a 420-residue protein sequence, read N- to C-terminus: Serine hydroxymethyltransferase (420 aa).

Residues L121 and 125–127 (GHL) each bind (6S)-5,6,7,8-tetrahydrofolate. Position 230 is an N6-(pyridoxal phosphate)lysine (K230).

Belongs to the SHMT family. In terms of assembly, homodimer. Pyridoxal 5'-phosphate is required as a cofactor.

The protein localises to the cytoplasm. It catalyses the reaction (6R)-5,10-methylene-5,6,7,8-tetrahydrofolate + glycine + H2O = (6S)-5,6,7,8-tetrahydrofolate + L-serine. It participates in one-carbon metabolism; tetrahydrofolate interconversion. Its pathway is amino-acid biosynthesis; glycine biosynthesis; glycine from L-serine: step 1/1. In terms of biological role, catalyzes the reversible interconversion of serine and glycine with tetrahydrofolate (THF) serving as the one-carbon carrier. This reaction serves as the major source of one-carbon groups required for the biosynthesis of purines, thymidylate, methionine, and other important biomolecules. Also exhibits THF-independent aldolase activity toward beta-hydroxyamino acids, producing glycine and aldehydes, via a retro-aldol mechanism. The chain is Serine hydroxymethyltransferase from Streptomyces avermitilis (strain ATCC 31267 / DSM 46492 / JCM 5070 / NBRC 14893 / NCIMB 12804 / NRRL 8165 / MA-4680).